Reading from the N-terminus, the 125-residue chain is Small ribosomal subunit protein uS13 (125 aa).

The tract at residues 94–125 (SLPVRGQRTQTNARTRKGKRKTVAGKKKAVKK) is disordered. Residues 107 to 125 (RTRKGKRKTVAGKKKAVKK) show a composition bias toward basic residues.

Belongs to the universal ribosomal protein uS13 family. In terms of assembly, part of the 30S ribosomal subunit. Forms a loose heterodimer with protein S19. Forms two bridges to the 50S subunit in the 70S ribosome.

Functionally, located at the top of the head of the 30S subunit, it contacts several helices of the 16S rRNA. In the 70S ribosome it contacts the 23S rRNA (bridge B1a) and protein L5 of the 50S subunit (bridge B1b), connecting the 2 subunits; these bridges are implicated in subunit movement. Contacts the tRNAs in the A and P-sites. In Prosthecochloris aestuarii (strain DSM 271 / SK 413), this protein is Small ribosomal subunit protein uS13.